The following is a 100-amino-acid chain: MKLTPREKDKLLIFTAALLAERRRARGLKLNYPEAVAFITAALMEAARDGKTVAEVMHYGTTLLTRDDVMDGVPEMIPDIQVEATFPDGTKLVTVHHPIP.

Belongs to the urease gamma subunit family. In terms of assembly, heterotrimer of UreA (gamma), UreB (beta) and UreC (alpha) subunits. Three heterotrimers associate to form the active enzyme.

It is found in the cytoplasm. It catalyses the reaction urea + 2 H2O + H(+) = hydrogencarbonate + 2 NH4(+). Its pathway is nitrogen metabolism; urea degradation; CO(2) and NH(3) from urea (urease route): step 1/1. The sequence is that of Urease subunit gamma from Burkholderia ambifaria (strain MC40-6).